Reading from the N-terminus, the 390-residue chain is Homeobox protein Meis1 (390 aa).

Residues 108–192 (GGDVCSSESF…IDLVIDDREG (85 aa)) form the MEIS N-terminal domain. A compositionally biased stretch (basic and acidic residues) spans 190–202 (REGGSKSDSEDIT). Residues 190-279 (REGGSKSDSE…KKRHKKRGIF (90 aa)) form a disordered region. The segment covering 203 to 213 (RSANLTDQPSW) has biased composition (polar residues). The homeobox; TALE-type DNA-binding region spans 272–334 (RHKKRGIFPK…NARRRIVQPM (63 aa)). Positions 299-329 (YPSEEQKKQLAQDTGLTILQVNNWFINARRR) are interaction with DNA. Residues 335-390 (IDQSNRAVSQGTPYNPDGQPMGGFVMDGQQHMGIRAPGPMSGMGMNMGMEGQWHYM) are required for transcriptional activation.

The protein belongs to the TALE/MEIS homeobox family. In terms of assembly, interacts with the N-terminal region of PBX1 to form a heterodimer which binds DNA including a cAMP-responsive sequence in CYP17. Also forms heterodimers with PBX2. Forms heterotrimers with PBX1 or PBX2 and a number of HOX proteins including HOXA9, HOXD4 and HOXD9 where it acts as a non-DNA-binding partner. Also forms heterotrimers with PBX1 and HOX proteins including HOXD9 and HOXD10 where PBX1 is the non-DNA-binding partner. Heterodimer with DLX3. Heterodimer with HOXB13. In terms of tissue distribution, expressed at low level in normal immunohepatopoietic tissues, including the fetal liver. Expressed in a subset of myeloid leukemia cell lines, with the highest expression seen in those with a megakaryocytic-erythroid phenotype. Also expressed at high levels in the cerebellum.

Its subcellular location is the nucleus. Acts as a transcriptional regulator of PAX6. Acts as a transcriptional activator of PF4 in complex with PBX1 or PBX2. Required for hematopoiesis, megakaryocyte lineage development and vascular patterning. May function as a cofactor for HOXA7 and HOXA9 in the induction of myeloid leukemias. This Homo sapiens (Human) protein is Homeobox protein Meis1 (MEIS1).